A 424-amino-acid polypeptide reads, in one-letter code: MRVAIETYGCTTNQADSDIMRGFLSGEFELSSVEDAEVVIINSCGVIDFTERKIIRRMLDLKREGKKVVLAGCLTRISKEALSVADSALSPDNLDMVVDAVYSALNGRKLFTERRFIDKAEFSHLKCRLRENAIAIVSISEGCLGKCSFCATKFARGRLRSFSMDAIVREAERAVRAGYREIQLTSQDTGAYGMDKGRAMLPELLRKISEIEGEFRVRVGMMNPQHAVRMLDELINAYSSEKIYKFLHIPVQSGDNRILEDMKRNHTVEDYVEVVEAFRNSFDDVLISTDIIVGFPTETEEAFWKSYELIKETRPDIVNITRYSARKGTPAARLRDIPGWIKKERSRKLTDLMRKIGLENNKRFVGKKLRVLVTKEGKNGRNLARMNSYRAVVTEGAVGEFVEVKIKDCRFNYLIGQLAAEQPQ.

In terms of domain architecture, MTTase N-terminal spans 1-106 (MRVAIETYGC…VVDAVYSALN (106 aa)). 6 residues coordinate [4Fe-4S] cluster: Cys-10, Cys-44, Cys-73, Cys-143, Cys-147, and Cys-150. The Radical SAM core domain maps to 129–359 (LRENAIAIVS…TDLMRKIGLE (231 aa)). The region spanning 362 to 420 (KRFVGKKLRVLVTKEGKNGRNLARMNSYRAVVTEGAVGEFVEVKIKDCRFNYLIGQLAA) is the TRAM domain.

This sequence belongs to the methylthiotransferase family. CDKAL1 subfamily. It depends on [4Fe-4S] cluster as a cofactor.

The enzyme catalyses N(6)-L-threonylcarbamoyladenosine(37) in tRNA + (sulfur carrier)-SH + AH2 + 2 S-adenosyl-L-methionine = 2-methylsulfanyl-N(6)-L-threonylcarbamoyladenosine(37) in tRNA + (sulfur carrier)-H + 5'-deoxyadenosine + L-methionine + A + S-adenosyl-L-homocysteine + 2 H(+). Catalyzes the methylthiolation of N6-threonylcarbamoyladenosine (t(6)A), leading to the formation of 2-methylthio-N6-threonylcarbamoyladenosine (ms(2)t(6)A) at position 37 in tRNAs that read codons beginning with adenine. This chain is Probable threonylcarbamoyladenosine tRNA methylthiotransferase, found in Archaeoglobus fulgidus (strain ATCC 49558 / DSM 4304 / JCM 9628 / NBRC 100126 / VC-16).